We begin with the raw amino-acid sequence, 81 residues long: ATP synthase subunit c (81 aa).

The next 2 membrane-spanning stretches (helical) occupy residues 4–24 (MIAQ…AIGA) and 57–77 (VGLV…FVFA).

It belongs to the ATPase C chain family. As to quaternary structure, F-type ATPases have 2 components, F(1) - the catalytic core - and F(0) - the membrane proton channel. F(1) has five subunits: alpha(3), beta(3), gamma(1), delta(1), epsilon(1). F(0) has three main subunits: a(1), b(2) and c(10-14). The alpha and beta chains form an alternating ring which encloses part of the gamma chain. F(1) is attached to F(0) by a central stalk formed by the gamma and epsilon chains, while a peripheral stalk is formed by the delta and b chains.

The protein resides in the cell membrane. F(1)F(0) ATP synthase produces ATP from ADP in the presence of a proton or sodium gradient. F-type ATPases consist of two structural domains, F(1) containing the extramembraneous catalytic core and F(0) containing the membrane proton channel, linked together by a central stalk and a peripheral stalk. During catalysis, ATP synthesis in the catalytic domain of F(1) is coupled via a rotary mechanism of the central stalk subunits to proton translocation. Functionally, key component of the F(0) channel; it plays a direct role in translocation across the membrane. A homomeric c-ring of between 10-14 subunits forms the central stalk rotor element with the F(1) delta and epsilon subunits. This chain is ATP synthase subunit c, found in Mycobacterium leprae (strain TN).